We begin with the raw amino-acid sequence, 683 residues long: Cytoskeleton-associated protein 2 (683 aa).

2 disordered regions span residues 1–28 (MSTP…QRRQ) and 153–175 (NSKK…KKPV). Ser178 and Ser190 each carry phosphoserine. Disordered regions lie at residues 214-236 (KATK…SSNM) and 336-403 (EKSE…EKPV). Positions 219 to 236 (QPVNTSSVTVKSNRSSNM) are enriched in polar residues. Composition is skewed to basic and acidic residues over residues 336–345 (EKSEPVDQRR) and 362–376 (ETSE…EWKA). Ser534 is modified (phosphoserine). Thr579 and Thr582 each carry phosphothreonine. Ser595 carries the post-translational modification Phosphoserine. Thr596 and Thr597 each carry phosphothreonine. Tyr599 is subject to Phosphotyrosine. Ser602 is subject to Phosphoserine.

It belongs to the CKAP2 family. In terms of assembly, associates with alpha- and beta-tubulins. As to expression, abundant in testis, thymus, and in tumor derived cell lines, while barely detectable in liver, prostate, and kidney.

It is found in the cytoplasm. The protein resides in the cytoskeleton. The protein localises to the spindle. It localises to the spindle pole. In terms of biological role, possesses microtubule stabilizing properties. Involved in regulating aneuploidy, cell cycling, and cell death in a p53/TP53-dependent manner. This Homo sapiens (Human) protein is Cytoskeleton-associated protein 2.